The chain runs to 49 residues: Large ribosomal subunit protein bL32c (49 aa).

The segment at M1–A23 is disordered.

The protein belongs to the bacterial ribosomal protein bL32 family.

The protein resides in the plastid. Its subcellular location is the chloroplast. This Oltmannsiellopsis viridis (Marine flagellate) protein is Large ribosomal subunit protein bL32c.